Here is a 254-residue protein sequence, read N- to C-terminus: Nickel import ATP-binding protein NikD (254 aa).

In terms of domain architecture, ABC transporter spans Pro2–Val241. Gly36–Ser43 lines the ATP pocket.

This sequence belongs to the ABC transporter superfamily. Nickel importer (TC 3.A.1.5.3) family. In terms of assembly, the complex is composed of two ATP-binding proteins (NikD and NikE), two transmembrane proteins (NikB and NikC) and a solute-binding protein (NikA).

The protein localises to the cell inner membrane. The catalysed reaction is Ni(2+)(out) + ATP + H2O = Ni(2+)(in) + ADP + phosphate + H(+). Its function is as follows. Part of the ABC transporter complex NikABCDE involved in nickel import. Responsible for energy coupling to the transport system. This chain is Nickel import ATP-binding protein NikD, found in Shigella flexneri.